The sequence spans 458 residues: Lysine-rich nucleolar protein 1 (458 aa).

Basic and acidic residues predominate over residues 1 to 14 (MITKTHKVDLGLPE). The disordered stretch occupies residues 1-21 (MITKTHKVDLGLPEKKKKKKV). A Glycyl lysine isopeptide (Lys-Gly) (interchain with G-Cter in SUMO2) cross-link involves residue Lys7. Phosphoserine occurs at positions 42 and 50. The tract at residues 46–305 (ATSPSKSVAH…ESGVAGDPWK (260 aa)) is disordered. The span at 64 to 73 (VKKKKKKKKG) shows a compositional bias: basic residues. A Glycyl lysine isopeptide (Lys-Gly) (interchain with G-Cter in SUMO2) cross-link involves residue Lys101. Phosphoserine is present on Ser111. Residue Lys130 forms a Glycyl lysine isopeptide (Lys-Gly) (interchain with G-Cter in SUMO2) linkage. A Phosphoserine modification is found at Ser132. The span at 145–155 (GKKLKKHKKEK) shows a compositional bias: basic residues. The span at 173-192 (EAREARDVGDTCSVGKKDEE) shows a compositional bias: basic and acidic residues. Basic residues predominate over residues 198-218 (QKRKRKSPREHNGKVKKKKKI). Lys249 participates in a covalent cross-link: Glycyl lysine isopeptide (Lys-Gly) (interchain with G-Cter in SUMO1); alternate. Lys249 is covalently cross-linked (Glycyl lysine isopeptide (Lys-Gly) (interchain with G-Cter in SUMO2); alternate). Phosphoserine is present on Ser265. The span at 265 to 274 (SAKKKMKSKK) shows a compositional bias: basic residues. Residues Lys275, Lys287, and Lys305 each participate in a glycyl lysine isopeptide (Lys-Gly) (interchain with G-Cter in SUMO2) cross-link. An interaction with ZNF106 region spans residues 306–458 (EETDTDLEVV…NASKSVKLED (153 aa)). Residues Thr308 and Thr310 each carry the phosphothreonine modification. Glycyl lysine isopeptide (Lys-Gly) (interchain with G-Cter in SUMO2) cross-links involve residues Lys319, Lys353, Lys373, Lys375, and Lys407. The segment covering 336-353 (QEEIDRESGKTEASETRK) has biased composition (basic and acidic residues). A disordered region spans residues 336–355 (QEEIDRESGKTEASETRKWT). Residue Arg430 is modified to Omega-N-methylarginine. Lys442 participates in a covalent cross-link: Glycyl lysine isopeptide (Lys-Gly) (interchain with G-Cter in SUMO2).

In terms of assembly, interacts with ZNF106.

Its subcellular location is the nucleus. The protein localises to the nucleolus. This is Lysine-rich nucleolar protein 1 (KNOP1) from Homo sapiens (Human).